Here is a 462-residue protein sequence, read N- to C-terminus: Ribosomal protein uS12 methylthiotransferase RimO (462 aa).

The MTTase N-terminal domain maps to 22–133; sequence ASVAFLHLGC…IIEVLQRVRQ (112 aa). Positions 31, 67, 96, 171, 175, and 178 each coordinate [4Fe-4S] cluster. The region spanning 157–386 is the Radical SAM core domain; sequence TTGRFVSYLK…VAIQQPISAA (230 aa). In terms of domain architecture, TRAM spans 389–460; that stretch reads QALIGQTVDV…LYDLTGEINH (72 aa).

It belongs to the methylthiotransferase family. RimO subfamily. [4Fe-4S] cluster serves as cofactor.

The protein localises to the cytoplasm. It catalyses the reaction L-aspartate(89)-[ribosomal protein uS12]-hydrogen + (sulfur carrier)-SH + AH2 + 2 S-adenosyl-L-methionine = 3-methylsulfanyl-L-aspartate(89)-[ribosomal protein uS12]-hydrogen + (sulfur carrier)-H + 5'-deoxyadenosine + L-methionine + A + S-adenosyl-L-homocysteine + 2 H(+). Its function is as follows. Catalyzes the methylthiolation of an aspartic acid residue of ribosomal protein uS12. This Prochlorococcus marinus (strain MIT 9211) protein is Ribosomal protein uS12 methylthiotransferase RimO.